Here is a 106-residue protein sequence, read N- to C-terminus: Integration host factor subunit beta (106 aa).

The interval 57–106 (PARAGRNPRTGEHVPVEQKSVPFFKTGKEMRERLNRDGLDGATPPSPPAA) is disordered. Over residues 82-95 (TGKEMRERLNRDGL) the composition is skewed to basic and acidic residues.

Belongs to the bacterial histone-like protein family. Heterodimer of an alpha and a beta chain.

Functionally, this protein is one of the two subunits of integration host factor, a specific DNA-binding protein that functions in genetic recombination as well as in transcriptional and translational control. This chain is Integration host factor subunit beta, found in Afipia carboxidovorans (strain ATCC 49405 / DSM 1227 / KCTC 32145 / OM5) (Oligotropha carboxidovorans).